The chain runs to 131 residues: D-ribose pyranase (131 aa).

His-20 acts as the Proton donor in catalysis. Residues Asp-28, His-98, and 120–122 (YCN) contribute to the substrate site.

The protein belongs to the RbsD / FucU family. RbsD subfamily. As to quaternary structure, homodecamer.

It is found in the cytoplasm. The enzyme catalyses beta-D-ribopyranose = beta-D-ribofuranose. The protein operates within carbohydrate metabolism; D-ribose degradation; D-ribose 5-phosphate from beta-D-ribopyranose: step 1/2. Catalyzes the interconversion of beta-pyran and beta-furan forms of D-ribose. In Coprothermobacter proteolyticus (strain ATCC 35245 / DSM 5265 / OCM 4 / BT), this protein is D-ribose pyranase.